A 511-amino-acid chain; its full sequence is Maturase K (511 aa).

Belongs to the intron maturase 2 family. MatK subfamily.

It localises to the plastid. The protein localises to the chloroplast. Its function is as follows. Usually encoded in the trnK tRNA gene intron. Probably assists in splicing its own and other chloroplast group II introns. The polypeptide is Maturase K (Melica altissima (Siberian melic grass)).